Reading from the N-terminus, the 454-residue chain is Glutamyl-tRNA reductase (454 aa).

Residues 49–52 (TCNR), serine 109, 114–116 (ETQ), and glutamine 120 contribute to the substrate site. Residue cysteine 50 is the Nucleophile of the active site. An NADP(+)-binding site is contributed by 189-194 (GAGKMS). A disordered region spans residues 434-454 (NDKNKQTSSSREQVLVSRFPD).

The protein belongs to the glutamyl-tRNA reductase family. In terms of assembly, homodimer.

The catalysed reaction is (S)-4-amino-5-oxopentanoate + tRNA(Glu) + NADP(+) = L-glutamyl-tRNA(Glu) + NADPH + H(+). Its pathway is porphyrin-containing compound metabolism; protoporphyrin-IX biosynthesis; 5-aminolevulinate from L-glutamyl-tRNA(Glu): step 1/2. Its function is as follows. Catalyzes the NADPH-dependent reduction of glutamyl-tRNA(Glu) to glutamate 1-semialdehyde (GSA). This is Glutamyl-tRNA reductase from Brevibacillus brevis (strain 47 / JCM 6285 / NBRC 100599).